The chain runs to 766 residues: Signal transducer and activator of transcription 3.2 (766 aa).

Positions 150-162 (DVRKKVQDLEQKM) match the Essential for nuclear import motif. The SH2 domain maps to 580–670 (WNEGYIIGFI…DATNILVSPL (91 aa)). At S725 the chain carries Phosphoserine; by NLK.

This sequence belongs to the transcription factor STAT family. As to quaternary structure, forms a homodimer or a heterodimer with a related family member. Interacts with nlk.2. In terms of processing, phosphorylation of both tyrosine and serine residues, together with dimerization, is required for mesoderm induction.

Its subcellular location is the cytoplasm. It is found in the nucleus. Functionally, transcription factor that binds to target promoter sequences and activates transcription upon il6st/gp130 stimulation. Mediates ventralization of embryos, at least in part via inhibition of smad2 signaling. Required for hairy2 to induce dll1/delta1 and promote neural crest cell proliferation and differentiation. Involved in TGFbeta-mediated mesoderm induction in early embryos, acting downstream of map3k7/tak1 and nlk.2. This chain is Signal transducer and activator of transcription 3.2 (stat3.2), found in Xenopus laevis (African clawed frog).